Reading from the N-terminus, the 440-residue chain is Histidinol dehydrogenase (440 aa).

NAD(+)-binding residues include Tyr136, Gln197, and Asn220. 3 residues coordinate substrate: Ser243, Gln265, and His268. The Zn(2+) site is built by Gln265 and His268. Residues Glu333 and His334 each act as proton acceptor in the active site. Substrate-binding residues include His334, Asp367, Glu421, and His426. A Zn(2+)-binding site is contributed by Asp367. Position 426 (His426) interacts with Zn(2+).

The protein belongs to the histidinol dehydrogenase family. The cofactor is Zn(2+).

It carries out the reaction L-histidinol + 2 NAD(+) + H2O = L-histidine + 2 NADH + 3 H(+). Its pathway is amino-acid biosynthesis; L-histidine biosynthesis; L-histidine from 5-phospho-alpha-D-ribose 1-diphosphate: step 9/9. In terms of biological role, catalyzes the sequential NAD-dependent oxidations of L-histidinol to L-histidinaldehyde and then to L-histidine. In Pseudomonas aeruginosa (strain ATCC 15692 / DSM 22644 / CIP 104116 / JCM 14847 / LMG 12228 / 1C / PRS 101 / PAO1), this protein is Histidinol dehydrogenase.